Here is a 352-residue protein sequence, read N- to C-terminus: Putative squamosa promoter-binding-like protein 19 (352 aa).

The segment at 68 to 88 (AAAPATRRARGGSGGGGGGGG) is disordered. Gly residues predominate over residues 78–88 (GGSGGGGGGGG). The SBP-type zinc finger occupies 90–167 (AEACSVDGCR…DGHNRRRRKP (78 aa)). Positions 93, 98, 115, 118, 134, 137, 141, and 153 each coordinate Zn(2+). Positions 150–166 (KKSCRKRLDGHNRRRRK) match the Bipartite nuclear localization signal motif. A disordered region spans residues 152 to 174 (SCRKRLDGHNRRRRKPQHDALNP).

Its subcellular location is the nucleus. Functionally, trans-acting factor that binds specifically to the consensus nucleotide sequence 5'-TNCGTACAA-3'. The chain is Putative squamosa promoter-binding-like protein 19 (SPL19) from Oryza sativa subsp. japonica (Rice).